A 359-amino-acid polypeptide reads, in one-letter code: Probable mannitol dehydrogenase (359 aa).

Zn(2+) contacts are provided by C50, H72, C103, C106, C109, C117, and C165.

It belongs to the zinc-containing alcohol dehydrogenase family. Requires Zn(2+) as cofactor.

It catalyses the reaction D-mannitol + NAD(+) = D-mannose + NADH + H(+). Its function is as follows. Oxidizes mannitol to mannose. Provides the initial step by which translocated mannitol is committed to central metabolism and, by regulating mannitol pool size, is important in regulating salt tolerance at the cellular level. The polypeptide is Probable mannitol dehydrogenase (CAD1) (Medicago sativa (Alfalfa)).